The primary structure comprises 175 residues: T-cell surface glycoprotein CD3 epsilon chain (175 aa).

Residues 1–21 form the signal peptide; sequence MRCEVPLPLLGLLLCVVGAAA. Topologically, residues 22 to 100 are extracellular; it reads QGGQEEFAVE…VCANCEELDT (79 aa). The helical transmembrane segment at 101–121 threads the bilayer; the sequence is FTVVGIIAADLLITLGVLILV. Residues 122–175 lie on the Cytoplasmic side of the membrane; sequence YYFSKNKKGQSRAAAGSRPRAQKMRRPPPVPNPDYEPIRKGQRDVYAGLEHRGF. Residues 133–163 are disordered; it reads RAAAGSRPRAQKMRRPPPVPNPDYEPIRKGQ. Residues 146-173 enclose the ITAM domain; that stretch reads RRPPPVPNPDYEPIRKGQRDVYAGLEHR.

As to quaternary structure, the TCR/CD3 complex of T-lymphocytes consists of either a TCR alpha/beta or TCR gamma/delta heterodimer coexpressed at the cell surface with the invariant subunits of CD3 labeled gamma, delta, epsilon, zeta, and eta.

It localises to the cell membrane. In terms of biological role, the CD3 complex mediates signal transduction, resulting in T-cell activation and proliferation. Required for normal immune responses. This is T-cell surface glycoprotein CD3 epsilon chain (CD3E) from Gallus gallus (Chicken).